The sequence spans 122 residues: MRASPTPWLSRAEPYCQRESPMNLLTTTPAGDRYVTFNGIDFEGNMARVLAHLRRYIDDPRTGNAFWDRFKARLAAAESGGNAFQDKLLLLHSHVYYMGDLFEDQEDEAALADLRKLEEECF.

It belongs to the CowN family.

Is required to sustain N(2)-dependent growth in the presence of low levels of carbon monoxide (CO). Probably acts by protecting the N(2) fixation ability of the nitrogenase complex, which is inactivated in the presence of CO. The chain is N(2)-fixation sustaining protein CowN from Azorhizobium caulinodans (strain ATCC 43989 / DSM 5975 / JCM 20966 / LMG 6465 / NBRC 14845 / NCIMB 13405 / ORS 571).